We begin with the raw amino-acid sequence, 1711 residues long: Nuclear pore complex protein Nup214 (1711 aa).

Tandem repeats lie at residues 472-473, 486-487, 497-498, 511-512, 514-515, 535-536, 588-589, and 598-599. The interval 472–1703 is 45 X 2 AA repeats of F-G; that stretch reads FGAAAAKAPA…NSNAQKPAFG (1232 aa). Leucine-zipper regions lie at residues 650–672 and 767–788; these read LDDL…VQGL and LTRL…KSKL. The tract at residues 886-905 is disordered; it reads KPATANKYTQAAVAPPSPPD. Copy 9 of the repeat occupies 1009–1010; sequence FG. The interval 1012–1081 is disordered; sequence GSPAVAAPTP…NKSFGFGGFT (70 aa). Basic and acidic residues-rich tracts occupy residues 1037–1051 and 1058–1072; these read TKPK…KEFK and EESK…ETEN. An interaction with emb region spans residues 1044 to 1711; sequence AAESKEFKAV…FGGSSFMNYR (668 aa). 8 consecutive repeat copies span residues 1075-1076, 1077-1078, 1097-1098, 1106-1107, 1135-1136, 1218-1219, 1229-1230, and 1240-1241. The span at 1251–1261 shows a compositional bias: polar residues; the sequence is TSVTEANNKTD. The disordered stretch occupies residues 1251–1270; sequence TSVTEANNKTDPISTTPSAI. Repeat copies occupy residues 1356–1357, 1388–1389, 1399–1400, 1434–1435, 1449–1450, 1458–1459, 1472–1473, 1481–1482, 1487–1488, 1507–1508, 1512–1513, 1539–1540, 1547–1548, 1562–1563, 1571–1572, 1584–1585, 1588–1589, 1601–1602, 1617–1618, 1623–1624, 1629–1630, 1635–1636, 1641–1642, 1647–1648, 1650–1651, 1662–1663, and 1686–1687. Disordered stretches follow at residues 1533–1552 and 1557–1614; these read SPQA…SPAT and SGGS…TTTP. 2 stretches are compositionally biased toward gly residues: residues 1560–1572 and 1582–1595; these read SIFG…GGFG and GGFG…GGGS. Residues 1596–1614 show a composition bias toward low complexity; that stretch reads VAQTGFGSPQAPQQQTTTP. The span at 1688 to 1698 shows a compositional bias: polar residues; it reads NLAQTGNSNAQ. Residues 1688–1711 are disordered; that stretch reads NLAQTGNSNAQKPAFGGSSFMNYR. Repeat unit 45 spans residues 1702–1703; sequence FG.

As to quaternary structure, component of the nuclear pore complex. Interacts with mbo/Nup88 and (via C-terminus) with emb to attenuate emb-mediated protein export.

It is found in the nucleus. The protein resides in the nuclear pore complex. It localises to the nucleus membrane. Its function is as follows. Part of the nuclear pore complex. Serves as a docking site in the receptor-mediated import of substrates across the nuclear pore complex including emb, RanGAP and phosphorylated Mad. Protects mbo/Nup88 from proteasomal degradation at the nuclear pore. Together with mbo/Nup88, sequesters emb in the cytoplasm and thereby attenuates nuclear export signal (NES)-mediated nuclear export. Together with mbo/Nup88, required for the nuclear import of the Rel family transcription factors dorsal (dl) and Dorsal-related immunity factor (Dif) and the activation of an immune response. This chain is Nuclear pore complex protein Nup214, found in Drosophila melanogaster (Fruit fly).